We begin with the raw amino-acid sequence, 666 residues long: Translation factor guf1, mitochondrial (666 aa).

Residues 1-43 constitute a mitochondrion transit peptide; that stretch reads MRGCLQLARWLRAAPKCPAASLLKPPSGLANPARFFTTSTACW. One can recognise a tr-type G domain in the interval 68–248; it reads DRYRNFCIVA…TVVEKIPAPV (181 aa). GTP is bound by residues 77-84, 141-145, and 195-198; these read AHVDHGKS, DTPGH, and NKVD.

It belongs to the TRAFAC class translation factor GTPase superfamily. Classic translation factor GTPase family. LepA subfamily.

The protein resides in the mitochondrion inner membrane. It carries out the reaction GTP + H2O = GDP + phosphate + H(+). In terms of biological role, promotes mitochondrial protein synthesis. May act as a fidelity factor of the translation reaction, by catalyzing a one-codon backward translocation of tRNAs on improperly translocated ribosomes. Binds to mitochondrial ribosomes in a GTP-dependent manner. This is Translation factor guf1, mitochondrial (guf1) from Aspergillus niger (strain ATCC MYA-4892 / CBS 513.88 / FGSC A1513).